The sequence spans 484 residues: Glutamate--tRNA ligase (484 aa).

The short motif at 10-20 (PSPTGYLHVGG) is the 'HIGH' region element. Residues 252–256 (KLSKR) carry the 'KMSKS' region motif. Lys-255 is a binding site for ATP.

The protein belongs to the class-I aminoacyl-tRNA synthetase family. Glutamate--tRNA ligase type 1 subfamily. Monomer.

Its subcellular location is the cytoplasm. It carries out the reaction tRNA(Glu) + L-glutamate + ATP = L-glutamyl-tRNA(Glu) + AMP + diphosphate. Functionally, catalyzes the attachment of glutamate to tRNA(Glu) in a two-step reaction: glutamate is first activated by ATP to form Glu-AMP and then transferred to the acceptor end of tRNA(Glu). The chain is Glutamate--tRNA ligase from Mycoplasma genitalium (strain ATCC 33530 / DSM 19775 / NCTC 10195 / G37) (Mycoplasmoides genitalium).